Consider the following 482-residue polypeptide: Pancreatic lipase-related protein 2 (482 aa).

The N-terminal stretch at 1–30 (MPMDVRGCLFPSVQMLLCWLVSLLLATVGG) is a signal peptide. Residues Cys-34 and Cys-40 are joined by a disulfide bond. A glycan (N-linked (GlcNAc...) asparagine) is linked at Asn-92. The required for galactolipase activity stretch occupies residues 106-118 (IHGFIDKGEEGWL). Cys-122 and Cys-133 are disulfide-bonded. Residue Ser-184 is the Nucleophile of the active site. Asp-208 serves as the catalytic Charge relay system. Ca(2+) is bound by residues Glu-219, Arg-222, Asp-224, and Asp-227. A disulfide bond links Cys-269 and Cys-293. Residues 270–292 (QKNILSTIVDINGIWEGTRNFAA) form a required for galactolipase activity region. The Charge relay system role is filled by His-295. 2 cysteine pairs are disulfide-bonded: Cys-317–Cys-328 and Cys-331–Cys-336. N-linked (GlcNAc...) asparagine glycosylation is found at Asn-366 and Asn-441. The region spanning 370 to 482 (WRYKVSVTLS…EDVLQSLYPC (113 aa)) is the PLAT domain. A disulfide bond links Cys-466 and Cys-482.

The protein belongs to the AB hydrolase superfamily. Lipase family. Expressed in acinar cells of pancreas (at protein level).

It is found in the secreted. It localises to the zymogen granule membrane. The protein resides in the cell projection. The protein localises to the neuron projection. The catalysed reaction is a triacylglycerol + H2O = a diacylglycerol + a fatty acid + H(+). The enzyme catalyses a 1,2-diacyl-3-O-(beta-D-galactosyl)-sn-glycerol + 2 H2O = 3-beta-D-galactosyl-sn-glycerol + 2 a fatty acid + 2 H(+). It catalyses the reaction 1,2,3-tri-(9Z-octadecenoyl)-glycerol + H2O = di-(9Z)-octadecenoylglycerol + (9Z)-octadecenoate + H(+). It carries out the reaction di-(9Z)-octadecenoylglycerol + H2O = (9Z-octadecenoyl)-glycerol + (9Z)-octadecenoate + H(+). The catalysed reaction is (9Z-octadecenoyl)-glycerol + H2O = glycerol + (9Z)-octadecenoate + H(+). The enzyme catalyses 1-(9Z-octadecenoyl)-glycerol + H2O = glycerol + (9Z)-octadecenoate + H(+). It catalyses the reaction 1,2,3-tripropanoylglycerol + H2O = dipropanoylglycerol + propanoate + H(+). It carries out the reaction 1,2,3-tributanoylglycerol + H2O = dibutanoylglycerol + butanoate + H(+). The catalysed reaction is 1,2,3-trioctanoylglycerol + H2O = dioctanoylglycerol + octanoate + H(+). The enzyme catalyses 1,2-didecanoylglycerol + H2O = decanoylglycerol + decanoate + H(+). It catalyses the reaction long chain 1,2-diacyl-3-O-beta-D-galactosyl-sn-glycerol + H2O = long chain acyl-3-O-beta-D-galactosyl-sn-glycerol + a fatty acid + H(+). It carries out the reaction 1,2-dioctanoyl-3-O-beta-D-galactosyl-sn-glycerol + H2O = octanoyl-3-(beta-D-galactosyl)-sn-glycerol + octanoate + H(+). The catalysed reaction is 1,2-didodecanoyl-3-beta-D-galactosyl-sn-glycerol + H2O = dodecanoyl-3-beta-D-galactosyl-sn-glycerol + dodecanoate + H(+). The enzyme catalyses 1-beta-D-galactosyl-2,3-didodecanoyl-sn-glycerol + H2O = 1-beta-D-galactosyl-dodecanoyl-sn-glycerol + dodecanoate + H(+). It catalyses the reaction a 1,2-diacyl-3-O-[alpha-D-galactosyl-(1-&gt;6)-beta-D-galactosyl]-sn-glycerol + H2O = acyl-3-O-[alpha-D-galactosyl-(1-&gt;6)-beta-D-galactosyl]-sn-glycerol + a fatty acid + H(+). It carries out the reaction long chain 1,2-diacyl-3-O-[alpha-D-galactosyl-(1-&gt;6)-beta-D-galactosyl]-sn-glycerol + H2O = long chain acyl-3-O-[alpha-D-galactosyl-(1-&gt;6)-beta-D-galactosyl]-sn-glycerol + a fatty acid + H(+). The catalysed reaction is 1,2-dioctanoyl-3-O-[alpha-D-galactosyl-(1-&gt;6)-beta-D-galactosyl]-sn-glycerol + H2O = octanoyl-3-O-[alpha-D-galactosyl-(1-&gt;6)-beta-D-galactosyl]-sn-glycerol + octanoate + H(+). The enzyme catalyses 1,2-didodecanoyl-3-O-[alpha-D-galactosyl-(1-&gt;6)-beta-D-galactosyl]-sn-glycerol + H2O = dodecanoyl-3-O-[alpha-D-galactosyl-(1-&gt;6)-beta-D-galactosyl]-sn-glycerol + dodecanoate + H(+). It catalyses the reaction a 1,2-diacyl-sn-glycero-3-phosphocholine + H2O = a monoacyl-sn-glycero-3-phosphocholine + a fatty acid + H(+). It participates in glycerolipid metabolism; triacylglycerol degradation. It functions in the pathway glycolipid metabolism. Its activity is regulated as follows. CLPS stimulates triacylglycerol lipase activity. Triacylglycerol lipase activity is not inhibited by increasing bile salt concentration. Lipase that primarily hydrolyzes triglycerides and galactosylglycerides. In neonates, may play a major role in pancreatic digestion of dietary fats such as milk fat globules enriched in long-chain triglycerides. Hydrolyzes short-, medium- and long-chain fatty acyls in triglycerides without apparent positional specificity. Can completely deacylate triacylglycerols. When the liver matures and bile salt synthesis increases, likely functions mainly as a galactolipase and monoacylglycerol lipase. Hydrolyzes monogalactosyldiglycerols (MGDG) and digalactosyldiacylglycerols (DGDG) present in a plant-based diet, releasing long-chain polyunsaturated fatty acids. Hydrolyzes medium- and long-chain fatty acyls in galactolipids. May act together with LIPF to hydrolyze partially digested triglycerides. Hydrolyzes long-chain monoglycerides with high efficiency. In cytotoxic T cells, contributes to perforin-dependent cell lysis, but is unlikely to mediate direct cytotoxicity. Also has low phospholipase activity. In neurons, required for the localization of the phospholipid 1-oleoyl-2-palmitoyl-PC (OPPC) to neurite tips through acyl chain remodeling of membrane phospholipids. The resulting OPPC-rich lipid membrane domain recruits the t-SNARE protein STX4 by selectively interacting with the STX4 transmembrane domain and this promotes surface expression of the dopamine transporter SLC6A3/DAT at neurite tips by facilitating fusion of SLC6A3-containing transport vesicles with the plasma membrane. The polypeptide is Pancreatic lipase-related protein 2 (Mus musculus (Mouse)).